A 641-amino-acid polypeptide reads, in one-letter code: Chaperone protein DnaK (641 aa).

Position 200 is a phosphothreonine; by autocatalysis (threonine 200). Low complexity predominate over residues 605–623; it reads AAEQGGSADAASGNAQASK. Residues 605 to 627 form a disordered region; the sequence is AAEQGGSADAASGNAQASKAADD.

Belongs to the heat shock protein 70 family.

Its function is as follows. Acts as a chaperone. This is Chaperone protein DnaK from Xanthomonas oryzae pv. oryzae (strain MAFF 311018).